The sequence spans 772 residues: RNA exonuclease 5 (772 aa).

The span at 1–10 (MEPEREGTER) shows a compositional bias: basic and acidic residues. A disordered region spans residues 1 to 26 (MEPEREGTERHPRKVRKRRQAPNKLV). Residues 11 to 21 (HPRKVRKRRQA) are compositionally biased toward basic residues. Residues 228 to 376 (LFGLDCEMCL…EDARIILELA (149 aa)) form the Exonuclease domain. RRM domains are found at residues 505 to 579 (STVY…RPVT) and 600 to 679 (GSIY…RHLH).

The chain is RNA exonuclease 5 (REXO5) from Macaca fascicularis (Crab-eating macaque).